A 550-amino-acid chain; its full sequence is Aspartate--tRNA ligase (550 aa).

Glutamate 162 contacts L-aspartate. Positions 186–189 (QIYK) are aspartate. Arginine 208 serves as a coordination point for L-aspartate. ATP contacts are provided by residues 208–210 (RDE) and glutamine 217. Histidine 417 serves as a coordination point for L-aspartate. Glutamate 451 provides a ligand contact to ATP. Arginine 458 contributes to the L-aspartate binding site. 499-502 (GIDR) contacts ATP.

It belongs to the class-II aminoacyl-tRNA synthetase family. Type 1 subfamily. As to quaternary structure, homodimer.

It localises to the cytoplasm. The catalysed reaction is tRNA(Asp) + L-aspartate + ATP = L-aspartyl-tRNA(Asp) + AMP + diphosphate. Its function is as follows. Catalyzes the attachment of L-aspartate to tRNA(Asp) in a two-step reaction: L-aspartate is first activated by ATP to form Asp-AMP and then transferred to the acceptor end of tRNA(Asp). In Mycoplasma genitalium (strain ATCC 33530 / DSM 19775 / NCTC 10195 / G37) (Mycoplasmoides genitalium), this protein is Aspartate--tRNA ligase.